A 115-amino-acid polypeptide reads, in one-letter code: Ribonuclease P protein component (115 aa).

The protein belongs to the RnpA family. Consists of a catalytic RNA component (M1 or rnpB) and a protein subunit.

It carries out the reaction Endonucleolytic cleavage of RNA, removing 5'-extranucleotides from tRNA precursor.. In terms of biological role, RNaseP catalyzes the removal of the 5'-leader sequence from pre-tRNA to produce the mature 5'-terminus. It can also cleave other RNA substrates such as 4.5S RNA. The protein component plays an auxiliary but essential role in vivo by binding to the 5'-leader sequence and broadening the substrate specificity of the ribozyme. In Baumannia cicadellinicola subsp. Homalodisca coagulata, this protein is Ribonuclease P protein component.